Here is a 216-residue protein sequence, read N- to C-terminus: Ribosomal RNA small subunit methyltransferase G (216 aa).

S-adenosyl-L-methionine contacts are provided by residues G73, L78, 124–125, and R139; that span reads AE.

The protein belongs to the methyltransferase superfamily. RNA methyltransferase RsmG family.

Its subcellular location is the cytoplasm. Its function is as follows. Specifically methylates the N7 position of guanine in position 518 of 16S rRNA. The protein is Ribosomal RNA small subunit methyltransferase G of Paenarthrobacter aurescens (strain TC1).